The sequence spans 702 residues: Antigen peptide transporter 2 (702 aa).

At 1 to 6 (MALSYL) the chain is on the lumenal side. Residues 7–27 (RPWVSLLLADMALLGLLQGSL) traverse the membrane as a helical segment. The Cytoplasmic portion of the chain corresponds to 28–56 (GNLLPQGLPGLWIEGTLRLGVLWGLLKVG). The helical transmembrane segment at 57-77 (ELLGLVGTLLPLLCLATPLFF) threads the bilayer. Topologically, residues 78 to 98 (SLRALVGGTASTSVVRVASAS) are lumenal. Residues 99–119 (WGWLLAGYGAVALSWAVWAVL) traverse the membrane as a helical segment. At 120–147 (SPAGVQEKEPGQENRTLMKRLLKLSRPD) the chain is on the cytoplasmic side. The chain crosses the membrane as a helical span at residues 148-168 (LPFLIAAFFFLVVAVWGETLI). Residues 151–434 (LIAAFFFLVV…LVYMYGDMLS (284 aa)) form the ABC transmembrane type-1 domain. Residues 169–186 (PRYSGRVIDILGGDFDPD) are Lumenal-facing. The helical transmembrane segment at 187–207 (AFASAIFFMCLFSVGSSFSAG) threads the bilayer. At 208 to 265 (CRGGSFLFTMSRINLRIREQLFSSLLRQDLGFFQETKTGELNSRLSSDTSLMSRWLPF) the chain is on the cytoplasmic side. Residues 266 to 286 (NANILLRSLVKVVGLYFFMLQ) form a helical membrane-spanning segment. Over 287–292 (VSPRLT) the chain is Lumenal. The helical transmembrane segment at 293 to 313 (FLSLLDLPLTIAAEKVYNPRH) threads the bilayer. Residues 300–388 (PLTIAAEKVY…RRVMALGMQV (89 aa)) form a part of the peptide-binding site region. Residues 314 to 373 (QAVLKEIQDAVAKAGQVVREAVGGLQTVRSFGAEEQEVSHYKEALERCRQLWWRRDLEKD) are Cytoplasmic-facing. Residues 374–394 (VYLVIRRVMALGMQVLILNCG) traverse the membrane as a helical segment. The Lumenal segment spans residues 395 to 407 (VQQILAGEVTRGG). Residues 408-428 (LLSFLLYQEEVGQYVRNLVYM) traverse the membrane as a helical segment. Positions 413–432 (LYQEEVGQYVRNLVYMYGDM) are part of the peptide-binding site. The Cytoplasmic portion of the chain corresponds to 429–702 (YGDMLSNVGA…AHLVQQRLEA (274 aa)). The 235-residue stretch at 467 to 701 (VEFQDVSFSY…YAHLVQQRLE (235 aa)) folds into the ABC transporter domain. 502 to 509 (GPNGSGKS) is a binding site for ATP.

This sequence belongs to the ABC transporter superfamily. ABCB family. MHC peptide exporter (TC 3.A.1.209) subfamily. Heterodimer of TAP1 and TAP2 (TAP1-TAP2). A component of the peptide loading complex (PLC), interacts via TAPBP with MHCI heterodimer; this interaction mediates peptide-MHCI assembly. Mg(2+) serves as cofactor.

The protein localises to the endoplasmic reticulum membrane. The enzyme catalyses a peptide antigen(in) + ATP + H2O = a peptide antigen(out) + ADP + phosphate + H(+). In terms of biological role, ABC transporter associated with antigen processing. In complex with TAP1 mediates unidirectional translocation of peptide antigens from cytosol to endoplasmic reticulum (ER) for loading onto MHC class I (MHCI) molecules. Uses the chemical energy of ATP to export peptides against the concentration gradient. During the transport cycle alternates between 'inward-facing' state with peptide binding site facing the cytosol to 'outward-facing' state with peptide binding site facing the ER lumen. Peptide antigen binding to ATP-loaded TAP1-TAP2 induces a switch to hydrolysis-competent 'outward-facing' conformation ready for peptide loading onto nascent MHCI molecules. Subsequently ATP hydrolysis resets the transporter to the 'inward facing' state for a new cycle. As a component of the peptide loading complex (PLC), acts as a molecular scaffold essential for peptide-MHCI assembly and antigen presentation. The chain is Antigen peptide transporter 2 (Tap2) from Mus musculus (Mouse).